We begin with the raw amino-acid sequence, 540 residues long: MTAKDVKFRDGARSQIVKGVNVLADAVKVTLGPKGRNVVIERSFGAPVITKDGVSVAKEIELKDRFENMGAQIVKQVASKTADVAGDGTTTATVLAQAIVQEGMKHVAAGMNPMDLKRGIDKAVGVVLEELRTLSRPISTHKEIAQVGAISANADDAIGKIIADAMEKVGKEGVITVEDGKSLDNELDVVEGMQFDRGYISPYFINDPEKQAAYLDDALILLHDKKISNIRDLLPILEAASKAGKPLLIVAEDVEAEALATLVVNAMRGILKVAAVKAPGFGDRRKAMLEDIAILTGATVISEETGKQLDKATLDDLGSAKRVEVRKDDTIIIDGAGDAARIDARVKSIRVQIDEATSDYDREKLQERVAKLAGGVAVIKVGAVTEVEMKEKKDRVDDALHATRAAVEEGIVPGGGVALLRARAALTDLKGANGDQDAGIRIVLRALEAPLRVIASNAGDEPSVVIAKVLEGSGNFGYNAATGEYGDLVEAGVVDPTKVTRTALQNAASIAGLVLTTDATVADAPKDERAEAAPSPELGY.

Residues 30–33, lysine 51, 87–91, glycine 415, 479–481, and aspartate 495 contribute to the ATP site; these read TLGP, DGTTT, and NAA.

This sequence belongs to the chaperonin (HSP60) family. Forms a cylinder of 14 subunits composed of two heptameric rings stacked back-to-back. Interacts with the co-chaperonin GroES.

It localises to the cytoplasm. The enzyme catalyses ATP + H2O + a folded polypeptide = ADP + phosphate + an unfolded polypeptide.. Its function is as follows. Together with its co-chaperonin GroES, plays an essential role in assisting protein folding. The GroEL-GroES system forms a nano-cage that allows encapsulation of the non-native substrate proteins and provides a physical environment optimized to promote and accelerate protein folding. In Burkholderia vietnamiensis (strain G4 / LMG 22486) (Burkholderia cepacia (strain R1808)), this protein is Chaperonin GroEL 2.